The chain runs to 112 residues: Iron-sulfur cluster insertion protein ErpA (112 aa).

Iron-sulfur cluster contacts are provided by Cys-40, Cys-104, and Cys-106.

It belongs to the HesB/IscA family. Homodimer. The cofactor is iron-sulfur cluster.

Functionally, required for insertion of 4Fe-4S clusters for at least IspG. This is Iron-sulfur cluster insertion protein ErpA from Pseudoalteromonas translucida (strain TAC 125).